The following is a 1117-amino-acid chain: MKKASRSVGSVPKVSAISKTQTAEKIKPENSSSASTGGKLVKPGTAASLSKTKSSDDLLAGMAGGVTVTNGVKGKKSTCPSAAPSASAPAMTTVENKSKISTGTASSTKRSTSTGNKESSSTRERLRERTRLNQSKKLPSAGQGANDMALAKRSRSRTATECDVRMSKSKSDNQISDRAALEAKVKDLLTLAKTKDVEILHLRNELRDMRAQLGINEDHSEGDEKSEKETIMAHQPTDVESTLLQLQEQNTAIREELNQLKNENRMLKDRLNALGFSLEQRLDNSEKLFGYQSLSPEITPGNQSDGGGTLTSSVEGSAPGSVEDLLSQDENTLMDHQHSNSMDNLDSECSEVYQPLTSSDDALDAPSSSESEGIPSIERSRKGSSGNASEVSVACLTERIHQMEENQHSTSEELQATLQELADLQQITQELNSENERLGEEKVILMESLCQQSDKLEHFSRQIEYFRSLLDEHHISYVIDEDVKSGRYMELEQRYMDLAENARFEREQLLGVQQHLSNTLKMAEQDNKEAQEMIGALKERSHHMERIIESEQKGKAALAATLEEYKATVASDQIEMNRLKAQLENEKQKVAELYSIHNSGDKSDIQDLLESVRLDKEKAETLASSLQEDLAHTRNDANRLQDAIAKVEDEYRAFQEEAKKQIEDLNMTLEKLRSDLDEKETERSDMKETIFELEDEVEQHRAVKLHDNLIISDLENTVKKLQDQKHDMEREIKTLHRRLREESAEWRQFQADLQTAVVIANDIKSEAQEEIGDLKRRLHEAQEKNEKLTKELEEIKSRKQEEERGRVYNYMNAVERDLAALRQGMGLSRRSSTSSEPTPTVKTLIKSFDSASQVPNPAAAAIPRTPLSPSPMKTPPAAAVSPMQRHSISGPISTSKPLTALSDKRPNYGEIPVQEHLLRTSSASRPASLPRVPAMESAKTLSVSRRSSEEVKRDISAQEGASPASLMAMGTTSPQLSLSSSPTASVTPTTRSRIREERKDPLSALAREYGGSKRNALLKWCQKKTEGYQNIDITNFSSSWNDGLAFCALLHTYLPAHIPYQELNSQDKRRNFMLAFQAAESVGIKSTLDINEMVRTERPDWQNVMLYVTAIYKYFET.

Disordered stretches follow at residues 1–176 (MKKA…NQIS), 293–323 (SLSP…GSVE), and 358–390 (SSDD…NASE). Over residues 45–90 (TAASLSKTKSSDDLLAGMAGGVTVTNGVKGKKSTCPSAAPSASAPA) the composition is skewed to low complexity. Residues 93–117 (TVENKSKISTGTASSTKRSTSTGNK) show a composition bias toward polar residues. Composition is skewed to basic and acidic residues over residues 120–131 (SSTRERLRERTR) and 158–171 (TATE…KSKS). Residues 168-280 (KSKSDNQISD…LNALGFSLEQ (113 aa)) adopt a coiled-coil conformation. Over residues 293-303 (SLSPEITPGNQ) the composition is skewed to polar residues. Positions 358–377 (SSDDALDAPSSSESEGIPSI) are enriched in low complexity. A phosphoserine mark is found at S384, S385, and S389. Coiled-coil stretches lie at residues 394 to 449 (ACLT…MESL) and 487 to 807 (RYME…RGRV). A phosphoserine mark is found at S868, S881, and S887. The segment at 920–997 (TSSASRPASL…PTTRSRIREE (78 aa)) is disordered. Over residues 946–956 (RSSEEVKRDIS) the composition is skewed to basic and acidic residues. Low complexity predominate over residues 971–990 (TTSPQLSLSSSPTASVTPTT). The Calponin-homology (CH) domain occupies 1011–1116 (GSKRNALLKW…YVTAIYKYFE (106 aa)).

Belongs to the cytospin-A family. May interact with both microtubules and actin cytoskeleton.

The protein resides in the cytoplasm. It localises to the cytoskeleton. The protein localises to the spindle. Its subcellular location is the cell junction. It is found in the gap junction. In terms of biological role, involved in cytokinesis and spindle organization. May play a role in actin cytoskeleton organization and microtubule stabilization and hence required for proper cell adhesion and migration. The protein is Cytospin-A (SPECC1L) of Homo sapiens (Human).